The chain runs to 315 residues: MARIAYLGPEGTFTEAALRQITAAGLVPGQGADGVRPTPVDGTPAALDAVRDGAADYACVPIENSIDGSVTPTLDSLAIGSPLQVFAETTLDVAFSIVVKPGLSAADVRTLAAIGVAAAQVRQWVAANLAGAQLRPAYSNADAAQQVAEGRADAAVTSPLAAARWGLDTLADGVVDEPNARTRFVLVGPPAPPPARTGADRTSVVLRIDNAPGALLAALAEFGIRGIDLTRIESRPTRTGLGIYRFFADCVGHIDDEPVAEALKALHRRCADVRYLGSWPTGTPAGALPPSTEEAVRWLAAVRDGKPEPPGESRR.

A Prephenate dehydratase domain is found at 3 to 189; sequence RIAYLGPEGT…ARTRFVLVGP (187 aa). In terms of domain architecture, ACT spans 203–280; it reads SVVLRIDNAP…ADVRYLGSWP (78 aa).

In terms of assembly, homodimer.

The catalysed reaction is prephenate + H(+) = 3-phenylpyruvate + CO2 + H2O. The protein operates within amino-acid biosynthesis; L-phenylalanine biosynthesis; phenylpyruvate from prephenate: step 1/1. This chain is Prephenate dehydratase (pheA), found in Mycobacterium avium (strain 104).